The sequence spans 436 residues: UPF0597 protein YhaM (436 aa).

Belongs to the UPF0597 family.

The chain is UPF0597 protein YhaM from Escherichia coli O139:H28 (strain E24377A / ETEC).